The following is a 226-amino-acid chain: V-type proton ATPase subunit E (226 aa).

It belongs to the V-ATPase E subunit family. V-ATPase is a heteromultimeric enzyme composed of a peripheral catalytic V1 complex (components A to H) attached to an integral membrane V0 proton pore complex (components: a, c, c', c'' and d).

Functionally, subunit of the peripheral V1 complex of vacuolar ATPase essential for assembly or catalytic function. V-ATPase is responsible for acidifying a variety of intracellular compartments in eukaryotic cells. This chain is V-type proton ATPase subunit E (VATE), found in Mesembryanthemum crystallinum (Common ice plant).